Reading from the N-terminus, the 447-residue chain is GTPase Der (447 aa).

EngA-type G domains follow at residues 4–165 (KIIT…PEEE) and 180–357 (LQIV…KIWN). Residues 10–17 (GRPNVGKS), 57–61 (DTPGL), 119–122 (NKCE), 186–193 (GRPNAGKS), 233–237 (DTAGL), and 298–301 (NKWD) contribute to the GTP site. The region spanning 358–443 (KKITTSKLNE…PIRFTYVKTK (86 aa)) is the KH-like domain.

Belongs to the TRAFAC class TrmE-Era-EngA-EngB-Septin-like GTPase superfamily. EngA (Der) GTPase family. In terms of assembly, associates with the 50S ribosomal subunit.

GTPase that plays an essential role in the late steps of ribosome biogenesis. This Rickettsia felis (strain ATCC VR-1525 / URRWXCal2) (Rickettsia azadi) protein is GTPase Der.